Reading from the N-terminus, the 122-residue chain is Large ribosomal subunit protein uL29B (122 aa).

The stretch at 10-69 (QLGIKQIEERAAEIKAELAALRQKKNSGDVGANDIKTAKKNLARALTVRREKILEELVEA) forms a coiled coil.

It belongs to the universal ribosomal protein uL29 family. In terms of assembly, component of the large ribosomal subunit.

It is found in the cytoplasm. This Encephalitozoon cuniculi (strain GB-M1) (Microsporidian parasite) protein is Large ribosomal subunit protein uL29B (RPL35C).